The following is a 655-amino-acid chain: p-hydroxybenzoic acid efflux pump subunit AaeB (655 aa).

11 consecutive transmembrane segments (helical) span residues 13–33 (FAVK…HFQL), 38–58 (WAVL…GGEP), 69–89 (LRII…IAMI), 93–113 (LLMI…SSLV), 121–141 (WGLA…EPLL), 152–172 (EIVI…PRSI), 370–390 (LFWL…IAVV), 407–427 (FIYG…VIIP), 431–451 (QSML…GIEV), 459–479 (MGAL…TFHF), and 482–502 (FLDS…VILL).

Belongs to the aromatic acid exporter ArAE (TC 2.A.85) family.

Its subcellular location is the cell inner membrane. Forms an efflux pump with AaeA. Could function as a metabolic relief valve, allowing to eliminate certain compounds when they accumulate to high levels in the cell. The sequence is that of p-hydroxybenzoic acid efflux pump subunit AaeB from Escherichia coli O7:K1 (strain IAI39 / ExPEC).